The sequence spans 98 residues: MSANQVKLTPKDILEKEFKVSMRGYNQDEVDQFLDIVIKDYEAFQQELDELRQENARLKRQVEELQKRPTTPTGTTNYDILQRLSNLEKHVFGRKLYE.

Residues 34 to 71 are a coiled coil; sequence LDIVIKDYEAFQQELDELRQENARLKRQVEELQKRPTT.

The protein belongs to the GpsB family. As to quaternary structure, forms polymers through the coiled coil domains. Interacts with PBP1, MreC and EzrA.

The protein localises to the cytoplasm. Its function is as follows. Divisome component that associates with the complex late in its assembly, after the Z-ring is formed, and is dependent on DivIC and PBP2B for its recruitment to the divisome. Together with EzrA, is a key component of the system that regulates PBP1 localization during cell cycle progression. Its main role could be the removal of PBP1 from the cell pole after pole maturation is completed. Also contributes to the recruitment of PBP1 to the division complex. Not essential for septum formation. The polypeptide is Cell cycle protein GpsB (Geobacillus thermodenitrificans (strain NG80-2)).